The primary structure comprises 198 residues: Inner membrane-spanning protein YciB (198 aa).

A run of 5 helical transmembrane segments spans residues 36–56 (IYSATAVLIISSVVVYGAIFI), 67–87 (LTLVACLVFGSLTLAFHSETF), 90–110 (WKAPVVNWLFALAFIGSHFIG), 135–155 (VAWIVFFLFCGAANLFVAFTF), and 162–182 (FKVFGSLGMTVLFLVAQGIYL).

Belongs to the YciB family.

Its subcellular location is the cell inner membrane. Its function is as follows. Plays a role in cell envelope biogenesis, maintenance of cell envelope integrity and membrane homeostasis. The protein is Inner membrane-spanning protein YciB of Pseudomonas fluorescens (strain SBW25).